Reading from the N-terminus, the 301-residue chain is Zinc finger protein LEE1 (301 aa).

Residues 1-25 (MDAFENMSVSNHPGGNARRNSQSAN) form a disordered region. The span at 7 to 25 (MSVSNHPGGNARRNSQSAN) shows a compositional bias: polar residues. Ser21 and Ser30 each carry phosphoserine. 2 consecutive C3H1-type zinc fingers follow at residues 87-114 (DYSH…HSPD) and 123-145 (PCKY…HVLP). A Phosphoserine modification is found at Ser282.

This Saccharomyces cerevisiae (strain ATCC 204508 / S288c) (Baker's yeast) protein is Zinc finger protein LEE1 (LEE1).